The sequence spans 434 residues: Serine--tRNA ligase (434 aa).

Residue 239 to 241 (TAE) participates in L-serine binding. 270–272 (RSE) contacts ATP. L-serine is bound at residue Glu293. 357–360 (EISS) contributes to the ATP binding site. An L-serine-binding site is contributed by Ser392.

It belongs to the class-II aminoacyl-tRNA synthetase family. Type-1 seryl-tRNA synthetase subfamily. In terms of assembly, homodimer. The tRNA molecule binds across the dimer.

Its subcellular location is the cytoplasm. It carries out the reaction tRNA(Ser) + L-serine + ATP = L-seryl-tRNA(Ser) + AMP + diphosphate + H(+). It catalyses the reaction tRNA(Sec) + L-serine + ATP = L-seryl-tRNA(Sec) + AMP + diphosphate + H(+). It functions in the pathway aminoacyl-tRNA biosynthesis; selenocysteinyl-tRNA(Sec) biosynthesis; L-seryl-tRNA(Sec) from L-serine and tRNA(Sec): step 1/1. Catalyzes the attachment of serine to tRNA(Ser). Is also able to aminoacylate tRNA(Sec) with serine, to form the misacylated tRNA L-seryl-tRNA(Sec), which will be further converted into selenocysteinyl-tRNA(Sec). This is Serine--tRNA ligase from Cupriavidus necator (strain ATCC 17699 / DSM 428 / KCTC 22496 / NCIMB 10442 / H16 / Stanier 337) (Ralstonia eutropha).